We begin with the raw amino-acid sequence, 356 residues long: Rhomboid-related protein 1 (356 aa).

7 helical membrane passes run 107–129 (WCPP…FFYW), 172–194 (YMFL…LVGI), 201–223 (KIWR…QYAI), 227–249 (SLLV…NVIL), 256–275 (LRWI…FGGA), 290–312 (HLAH…YNVV), and 319–341 (IIRY…FVIV). Residue S233 is the Nucleophile of the active site. H293 is a catalytic residue.

The protein belongs to the peptidase S54 family.

It is found in the membrane. The enzyme catalyses Cleaves type-1 transmembrane domains using a catalytic dyad composed of serine and histidine that are contributed by different transmembrane domains.. Its function is as follows. Serine protease which activates lin-3 isoform a in the proximal vulva precursor cells (VPC) during vulva development to transmit the inductive anchor cell signal to the distal VPCs. This chain is Rhomboid-related protein 1, found in Caenorhabditis elegans.